Consider the following 173-residue polypeptide: Probable F-box protein At1g27490 (173 aa).

Residues 1–46 (MEWSLPVDLQEEILSRVPAKSLARWKSTPKQWKGPISIEFLHLLRS) form the F-box domain.

This is Probable F-box protein At1g27490 from Arabidopsis thaliana (Mouse-ear cress).